We begin with the raw amino-acid sequence, 88 residues long: uncharacterized protein (88 aa).

Residues 1-88 form a disordered region; that stretch reads MPHLPELSKQ…IRRGNPSGVA (88 aa). The segment covering 21–65 has biased composition (basic and acidic residues); it reads YRAKGEDLENSHHNNESRLAEGVHYDRNKAPALQEREKASTEKVN.

Involved in osmoadaptation. This is an uncharacterized protein from Emericella nidulans (strain FGSC A4 / ATCC 38163 / CBS 112.46 / NRRL 194 / M139) (Aspergillus nidulans).